A 429-amino-acid chain; its full sequence is Adenylosuccinate synthetase (429 aa).

GTP contacts are provided by residues G12–K18 and G40–T42. The Proton acceptor role is filled by D13. Residues D13 and G40 each contribute to the Mg(2+) site. IMP-binding positions include D13 to K16, N38 to H41, T128, R142, Q223, T238, and R302. H41 serves as the catalytic Proton donor. V298 to R304 serves as a coordination point for substrate. Residues R304, K330–D332, and G412–G414 each bind GTP.

It belongs to the adenylosuccinate synthetase family. As to quaternary structure, homodimer. The cofactor is Mg(2+).

It localises to the cytoplasm. The catalysed reaction is IMP + L-aspartate + GTP = N(6)-(1,2-dicarboxyethyl)-AMP + GDP + phosphate + 2 H(+). The protein operates within purine metabolism; AMP biosynthesis via de novo pathway; AMP from IMP: step 1/2. Its function is as follows. Plays an important role in the de novo pathway of purine nucleotide biosynthesis. Catalyzes the first committed step in the biosynthesis of AMP from IMP. This chain is Adenylosuccinate synthetase, found in Arthrobacter sp. (strain FB24).